The sequence spans 377 residues: Palmitoyltransferase ZDHHC16 (377 aa).

The Cytoplasmic segment spans residues 1–77; that stretch reads MRGQRSLLLG…VYWLVDNVIR (77 aa). A helical transmembrane segment spans residues 78–98; it reads WFGVVFVVLVIVLTGSIVAIA. Over 99 to 116 the chain is Lumenal; that stretch reads YLCVLPLILRTYSVPRLC. A helical transmembrane segment spans residues 117 to 137; sequence WHFFYSHWNLILIVFHYYQAI. At 138–198 the chain is on the cytoplasmic side; the sequence is TTPPGYPPQG…NNCVGHYNHR (61 aa). In terms of domain architecture, DHHC spans 155–205; sequence SICKKCIYPKPARTHHCSICNRCVLKMDHHCPWLNNCVGHYNHRYFFSFCF. Residue Cys185 is the S-palmitoyl cysteine intermediate of the active site. Residues 199-219 traverse the membrane as a helical segment; sequence YFFSFCFFMTLGCVYCSYGSW. Topologically, residues 220-266 are lumenal; that stretch reads DLFREAYAAIEKMKQLDKNKLQAVANQTYHQTPPPIFSFRERMTHKS. Residues 267-287 traverse the membrane as a helical segment; that stretch reads LVYLWFLCSSVALALGALTVW. Residues 288–377 are Cytoplasmic-facing; sequence HAVLISRGET…TAHSASVMAV (90 aa).

Belongs to the DHHC palmitoyltransferase family. Interacts with ABL1. Interacts with COPS5/JAB1.

It is found in the endoplasmic reticulum membrane. It carries out the reaction L-cysteinyl-[protein] + hexadecanoyl-CoA = S-hexadecanoyl-L-cysteinyl-[protein] + CoA. Functionally, palmitoyl acyltransferase that mediates palmitoylation of proteins such as PLN and ZDHHC6. Required during embryonic heart development and cardiac function, possibly by mediating palmitoylation of PLN, thereby affecting PLN phosphorylation and homooligomerization. Also required for eye development. Palmitoylates ZDHHC6, affecting the quaternary assembly of ZDHHC6, its localization, stability and function. May play a role in DNA damage response. May be involved in apoptosis regulation. Involved in the proliferation of neural stem cells by regulating the FGF/ERK pathway. This Macaca fascicularis (Crab-eating macaque) protein is Palmitoyltransferase ZDHHC16.